We begin with the raw amino-acid sequence, 625 residues long: Baeyer-Villiger monooxygenase ATR8 (625 aa).

FAD contacts are provided by residues D112, T120 to W123, D132, and Y138. Q130–D132 lines the NADP(+) pocket. Residues T266–Q272, R289–T290, and K405–R406 each bind NADP(+).

Belongs to the FAD-binding monooxygenase family. Requires FAD as cofactor.

Its pathway is mycotoxin biosynthesis. Its function is as follows. Baeyer-Villiger monooxygenase; part of the core atranone cluster (CAC) which products are predicted to catalyze most or all steps of mycotoxin atranone synthesis, starting from geranylgeranyl pyrophosphate (GGPP). The initial cyclization of GGPP to dolabellane is probably performed by the terpene cyclase ATR13. The Baeyer-Villiger oxidation near the end of the atranone synthesis, which converts atranones D and E to atranones F and G is predicted to be catalyzed by the monooxygenase ATR8. Of the CAC's other predicted gene products, the reducing PKS ATR6 might synthesize a polyketide chain. This polyketide is probably transferred onto the atranone backbone by the polyketide transferase ATR5. Other predicted CAC products include 4 oxygenases (ATR2, ATR3, ATR4, and ATR14), 3 short-chain reductases (ATR7, ATR9, and ATR10), and a methyltransferase (ATR12). These may all be involved in the various steps of atranone biosynthesis, although their specific roles must await experimental determination. This Stachybotrys chlorohalonatus (strain IBT 40285) protein is Baeyer-Villiger monooxygenase ATR8.